We begin with the raw amino-acid sequence, 315 residues long: Ribosomal RNA small subunit methyltransferase H (315 aa).

Residues 37–39 (GGH), aspartate 57, phenylalanine 83, aspartate 105, and glutamine 112 contribute to the S-adenosyl-L-methionine site.

The protein belongs to the methyltransferase superfamily. RsmH family.

Its subcellular location is the cytoplasm. It catalyses the reaction cytidine(1402) in 16S rRNA + S-adenosyl-L-methionine = N(4)-methylcytidine(1402) in 16S rRNA + S-adenosyl-L-homocysteine + H(+). Its function is as follows. Specifically methylates the N4 position of cytidine in position 1402 (C1402) of 16S rRNA. This Pseudomonas fluorescens (strain SBW25) protein is Ribosomal RNA small subunit methyltransferase H.